A 135-amino-acid chain; its full sequence is Fatty acid-binding protein 5 (135 aa).

A2 carries the N-acetylalanine modification. An N6-acetyllysine modification is found at K17. The Nuclear localization signal signature appears at 24 to 34 (KELGVGIALRK). N-eicosanoyl ethanolamine is bound by residues C43 and R109. Cysteines 120 and 127 form a disulfide. 129 to 131 (RIY) lines the (9Z,12Z)-octadecadienoate pocket. Position 131 (Y131) interacts with N-eicosanoyl ethanolamine. Y131 contacts hexadecanoate. Residue Y131 is modified to Phosphotyrosine.

The protein belongs to the calycin superfamily. Fatty-acid binding protein (FABP) family. In terms of assembly, monomer. Homodimer. As to expression, keratinocytes; highly expressed in psoriatic skin. Expressed in brain gray matter.

The protein resides in the cytoplasm. It is found in the nucleus. The protein localises to the synapse. Its subcellular location is the postsynaptic density. It localises to the secreted. It carries out the reaction hexadecanoate(out) = hexadecanoate(in). The enzyme catalyses (9Z,12Z)-octadecadienoate(out) = (9Z,12Z)-octadecadienoate(in). The catalysed reaction is (9Z)-octadecenoate(out) = (9Z)-octadecenoate(in). In terms of biological role, intracellular carrier for long-chain fatty acids and related active lipids, such as endocannabinoids, that regulate the metabolism and actions of the ligands they bind. In addition to the cytosolic transport, selectively delivers specific fatty acids from the cytosol to the nucleus, wherein they activate nuclear receptors. Delivers retinoic acid to the nuclear receptor peroxisome proliferator-activated receptor delta; which promotes proliferation and survival. May also serve as a synaptic carrier of endocannabinoid at central synapses and thus controls retrograde endocannabinoid signaling. Modulates inflammation by regulating PTGES induction via NF-kappa-B activation, and prostaglandin E2 (PGE2) biosynthesis during inflammation. May be involved in keratinocyte differentiation. This is Fatty acid-binding protein 5 from Homo sapiens (Human).